The following is a 276-amino-acid chain: Pyridinium-3,5-bisthiocarboxylic acid mononucleotide synthase (276 aa).

Catalysis depends on C176, which acts as the Nucleophile and sulfur donor. 2,3-didehydroalanine (Cys) is present on C176.

This sequence belongs to the LarE family.

The enzyme catalyses pyridinium-3,5-dicarboxylate mononucleotide + [LarE protein]-L-cysteine + ATP = [LarE protein]-dehydroalanine + pyridinium-3-carboxylate-5-thiocarboxylate mononucleotide + AMP + diphosphate + H(+). It catalyses the reaction [LarE protein]-L-cysteine + pyridinium-3-carboxylate-5-thiocarboxylate mononucleotide + ATP = pyridinium-3,5-bisthiocarboxylate mononucleotide + [LarE protein]-dehydroalanine + AMP + diphosphate + H(+). In terms of biological role, involved in the biosynthesis of a nickel-pincer cofactor ((SCS)Ni(II) pincer complex). Catalyzes the ATP-dependent incorporation of two sulfur atoms in pyridinium-3,5-biscarboxylic acid mononucleotide (P2CMN) to yield pyridinium-3,5-bisthiocarboxylic acid mononucleotide (P2TMN). The source of sulfur is the enzyme itself: Cys-176 of LarE is the sulfur donor, thereby being converted into dehydroalanine, and is not regenerated in vivo. Thus, two molecules of LarE undergo sacrificial sulfur transfer to create one P2TMN. Binds nickel. Is required for the activation of the lactate racemase LarA. May also be involved in the activation of other nickel-pincer cofactor-dependent enzymes. The chain is Pyridinium-3,5-bisthiocarboxylic acid mononucleotide synthase from Lactiplantibacillus plantarum (strain ATCC BAA-793 / NCIMB 8826 / WCFS1) (Lactobacillus plantarum).